The chain runs to 59 residues: Lantipeptide Flvbeta.f (59 aa).

A propeptide spans 1–27 (MEKMNNIAGITPENELDEMFDDSVVGA) (cleaved by FlvT). A 2,3-didehydrobutyrine; by FlvM2 mark is found at threonine 31 and threonine 32. 2 cross-links (beta-methyllanthionine (Thr-Cys); by FlvM2) span residues 41-47 (TKNPQIC) and 53-56 (TVKC).

Post-translationally, contains DL-beta-methyllanthionine, when coepressed in E.coli with the flavecin synthetase FlvM2.

It localises to the secreted. In terms of biological role, lanthionine-containing peptide that does probably not show antibacterial activity, since its analog [+7]Flvbeta.f does not show antibacterial activity against M.luteus. Also does not show antibiotic activity when tested with [Del2]Flvalpha.a, an analog of Flvalpha.a, which is encoded by the same operon than Flvbeta.f. The bactericidal activity of lantibiotics is based on depolarization of energized bacterial cytoplasmic membranes, initiated by the formation of aqueous transmembrane pores. This is Lantipeptide Flvbeta.f from Ruminococcus flavefaciens.